Reading from the N-terminus, the 181-residue chain is Adenylyl-sulfate kinase (181 aa).

13 to 20 (GVSGAGKS) provides a ligand contact to ATP. The Phosphoserine intermediate role is filled by Ser-87.

It belongs to the APS kinase family.

It carries out the reaction adenosine 5'-phosphosulfate + ATP = 3'-phosphoadenylyl sulfate + ADP + H(+). The protein operates within sulfur metabolism; hydrogen sulfide biosynthesis; sulfite from sulfate: step 2/3. Functionally, catalyzes the synthesis of activated sulfate. This is Adenylyl-sulfate kinase from Burkholderia ambifaria (strain ATCC BAA-244 / DSM 16087 / CCUG 44356 / LMG 19182 / AMMD) (Burkholderia cepacia (strain AMMD)).